Reading from the N-terminus, the 200-residue chain is HTH-type transcriptional regulator Hpr (200 aa).

In terms of domain architecture, HTH marR-type spans 13–157 (AMLFSQRIAQ…MMCIVRNIYG (145 aa)). The segment at residues 63 to 86 (ISEIAKFGVMHVSTAFNFSKKLEE) is a DNA-binding region (H-T-H motif).

As to quaternary structure, homodimer.

Functionally, negative regulator of protease production and sporulation. This Geobacillus thermodenitrificans (strain NG80-2) protein is HTH-type transcriptional regulator Hpr.